The primary structure comprises 511 residues: Phosphomethylpyrimidine synthase (511 aa).

Residues Asn-127, Met-156, Tyr-185, His-221, Ser-241 to Gly-243, Asp-282 to Arg-285, and Glu-321 each bind substrate. His-325 contacts Zn(2+). Tyr-348 contributes to the substrate binding site. Residue His-389 participates in Zn(2+) binding. Residues Cys-469, Cys-472, and Cys-477 each contribute to the [4Fe-4S] cluster site. The interval Lys-492–Lys-511 is disordered.

This sequence belongs to the ThiC family. [4Fe-4S] cluster is required as a cofactor.

It carries out the reaction 5-amino-1-(5-phospho-beta-D-ribosyl)imidazole + S-adenosyl-L-methionine = 4-amino-2-methyl-5-(phosphooxymethyl)pyrimidine + CO + 5'-deoxyadenosine + formate + L-methionine + 3 H(+). It functions in the pathway cofactor biosynthesis; thiamine diphosphate biosynthesis. Functionally, catalyzes the synthesis of the hydroxymethylpyrimidine phosphate (HMP-P) moiety of thiamine from aminoimidazole ribotide (AIR) in a radical S-adenosyl-L-methionine (SAM)-dependent reaction. The chain is Phosphomethylpyrimidine synthase from Leptospira borgpetersenii serovar Hardjo-bovis (strain JB197).